Consider the following 167-residue polypeptide: Leptin (167 aa).

Residues 1–21 (MCWRPLCRFLWLWSYLSYVQA) form the signal peptide. An intrachain disulfide couples Cys117 to Cys167.

It belongs to the leptin family.

It localises to the secreted. Functionally, key player in the regulation of energy balance and body weight control. Once released into the circulation, has central and peripheral effects by binding LEPR, found in many tissues, which results in the activation of several major signaling pathways. In the hypothalamus, acts as an appetite-regulating factor that induces a decrease in food intake and an increase in energy consumption by inducing anorexinogenic factors and suppressing orexigenic neuropeptides, also regulates bone mass and secretion of hypothalamo-pituitary-adrenal hormones. In the periphery, increases basal metabolism, influences reproductive function, regulates pancreatic beta-cell function and insulin secretion, is pro-angiogenic for endothelial cell and affects innate and adaptive immunity. In the arcuate nucleus of the hypothalamus, activates by depolarization POMC neurons inducing FOS and SOCS3 expression to release anorexigenic peptides and inhibits by hyperpolarization NPY neurons inducing SOCS3 with a consequent reduction on release of orexigenic peptides. In addition to its known satiety inducing effect, has a modulatory role in nutrient absorption. In the intestine, reduces glucose absorption by enterocytes by activating PKC and leading to a sequential activation of p38, PI3K and ERK signaling pathways which exerts an inhibitory effect on glucose absorption. Acts as a growth factor on certain tissues, through the activation of different signaling pathways increases expression of genes involved in cell cycle regulation such as CCND1, via JAK2-STAT3 pathway, or VEGFA, via MAPK1/3 and PI3K-AKT1 pathways. May also play an apoptotic role via JAK2-STAT3 pathway and up-regulation of BIRC5 expression. Pro-angiogenic, has mitogenic activity on vascular endothelial cells and plays a role in matrix remodeling by regulating the expression of matrix metalloproteinases (MMPs) and tissue inhibitors of metalloproteinases (TIMPs). In innate immunity, modulates the activity and function of neutrophils by increasing chemotaxis and the secretion of oxygen radicals. Increases phagocytosis by macrophages and enhances secretion of pro-inflammatory mediators. Increases cytotoxic ability of NK cells. Plays a pro-inflammatory role, in synergy with IL1B, by inducing NOS2 which promotes the production of IL6, IL8 and Prostaglandin E2, through a signaling pathway that involves JAK2, PI3K, MAP2K1/MEK1 and MAPK14/p38. In adaptive immunity, promotes the switch of memory T-cells towards T helper-1 cell immune responses. Increases CD4(+)CD25(-) T-cell proliferation and reduces autophagy during TCR (T-cell receptor) stimulation, through MTOR signaling pathway activation and BCL2 up-regulation. The sequence is that of Leptin (Lep) from Rattus norvegicus (Rat).